The chain runs to 487 residues: Recombining binding protein suppressor of hairless (487 aa).

DNA-binding regions lie at residues 44–54 (QKSYGNEKRFF) and 152–157 (SKPSKK). Lys-162 carries the post-translational modification N6-acetyllysine. The segment at 179 to 184 (RLRSQT) is DNA-binding. The IPT/TIG domain maps to 342–432 (PVVESLQLNG…YSTSLTFTYT (91 aa)). Positions 452 to 468 (SSQVPPNESNTNSEGSY) are enriched in polar residues. The disordered stretch occupies residues 452 to 487 (SSQVPPNESNTNSEGSYTNVSTNSTSVTSSTATVVS). Residues 469–487 (TNVSTNSTSVTSSTATVVS) show a composition bias toward low complexity.

Belongs to the Su(H) family. In terms of assembly, interacts with activated NOTCH1, NOTCH2 or NOTCH3. Interacts with MINT/SHARP. This interaction may mediate the recruitment of large corepressor complexes containing proteins such as HDAC1, HDAC2, NCOR2, SAP30, FHL1/KYOT2 and CIR1. Interacts with EP300, MAML1 and PTF1A. Interacts with RITA1, leading to nuclear export, prevent the interaction between RBPJ and NICD product and subsequent down-regulation of the Notch signaling pathway. Interacts with SNW1. Interacts with CHCHD2 and CXXC5. Interacts with BEND6 (via BEN domain). Interacts with NKAPL. Interacts with ZMIZ1. Interacts with RBM15. Interacts with L3MBTL3 and KDM1A; the interaction with KDM1A is weaker in the absence of L3MBTL3 and the interaction with L3MBTL3 is impaired by Notch-derived peptides containing the intracellular domain (NICD).

It localises to the nucleus. It is found in the cytoplasm. Functionally, transcriptional regulator that plays a central role in Notch signaling, a signaling pathway involved in cell-cell communication that regulates a broad spectrum of cell-fate determinations. Acts as a transcriptional repressor when it is not associated with Notch proteins. When associated with some NICD product of Notch proteins (Notch intracellular domain), it acts as a transcriptional activator that activates transcription of Notch target genes. Probably represses or activates transcription via the recruitment of chromatin remodeling complexes containing histone deacetylase or histone acetylase proteins, respectively. Specifically binds to the immunoglobulin kappa-type J segment recombination signal sequence. Binds specifically to methylated DNA. Binds to the oxygen responsive element of COX4I2 and activates its transcription under hypoxia conditions (4% oxygen). Negatively regulates the phagocyte oxidative burst in response to bacterial infection by repressing transcription of NADPH oxidase subunits. The protein is Recombining binding protein suppressor of hairless (RBPJ) of Bos taurus (Bovine).